The sequence spans 179 residues: Large ribosomal subunit protein uL6 (179 aa).

This sequence belongs to the universal ribosomal protein uL6 family. In terms of assembly, part of the 50S ribosomal subunit.

In terms of biological role, this protein binds to the 23S rRNA, and is important in its secondary structure. It is located near the subunit interface in the base of the L7/L12 stalk, and near the tRNA binding site of the peptidyltransferase center. The protein is Large ribosomal subunit protein uL6 of Trichlorobacter lovleyi (strain ATCC BAA-1151 / DSM 17278 / SZ) (Geobacter lovleyi).